We begin with the raw amino-acid sequence, 175 residues long: Ribosome maturation factor RimM (175 aa).

In terms of domain architecture, PRC barrel spans 103-175; it reads EGEYYWSDLI…LLTVDWDPDF (73 aa).

It belongs to the RimM family. As to quaternary structure, binds ribosomal protein uS19.

The protein localises to the cytoplasm. In terms of biological role, an accessory protein needed during the final step in the assembly of 30S ribosomal subunit, possibly for assembly of the head region. Essential for efficient processing of 16S rRNA. May be needed both before and after RbfA during the maturation of 16S rRNA. It has affinity for free ribosomal 30S subunits but not for 70S ribosomes. The chain is Ribosome maturation factor RimM from Nitrosococcus oceani (strain ATCC 19707 / BCRC 17464 / JCM 30415 / NCIMB 11848 / C-107).